The sequence spans 239 residues: Transcriptional regulatory protein DcuR (239 aa).

Positions 3–121 constitute a Response regulatory domain; the sequence is NVLIIDDDAM…RFEEALTGWR (119 aa). D56 carries the post-translational modification 4-aspartylphosphate. Residues 181-200 constitute a DNA-binding region (H-T-H motif); that stretch reads TDELANEVNISRVSCRKYLI.

Phosphorylated and activated by DcuS.

It localises to the cytoplasm. Functionally, member of the two-component regulatory system DcuR/DcuS. Involved in the C4-dicarboxylate-stimulated regulation of the genes encoding the anaerobic fumarate respiratory system (frdABCD; nuoAN; dcuB; dcuC; sdhCDAB; etc.). Weakly regulates the aerobic C4-dicarboxylate transporter dctA. This chain is Transcriptional regulatory protein DcuR (dcuR), found in Escherichia coli O157:H7.